A 260-amino-acid chain; its full sequence is Homeobox-leucine zipper protein HOX25 (260 aa).

Over residues 1–10 (MEDLVDELYG) the composition is skewed to acidic residues. Disordered regions lie at residues 1–24 (MEDL…ARKR), 121–145 (ANGK…PESA), and 190–221 (SPES…YPSS). A DNA-binding region (homeobox) is located at residues 19–79 (AAARKRRLTA…NRRARWKTKQ (61 aa)). A leucine-zipper region spans residues 78–122 (KQLELDFDRLRAAHDELLAGRAALAADNESLRSQVILLTEKLQAN). Acidic residues predominate over residues 205-218 (SEDDCGGAGSDDDY).

This sequence belongs to the HD-ZIP homeobox family. Class I subfamily. As to expression, expressed in roots, leaf sheaths and blades and panicles.

The protein localises to the nucleus. Functionally, probable transcription factor. The polypeptide is Homeobox-leucine zipper protein HOX25 (HOX25) (Oryza sativa subsp. indica (Rice)).